The following is a 130-amino-acid chain: Small ribosomal subunit protein uS9 (130 aa).

The protein belongs to the universal ribosomal protein uS9 family.

The polypeptide is Small ribosomal subunit protein uS9 (Nitrosomonas eutropha (strain DSM 101675 / C91 / Nm57)).